Reading from the N-terminus, the 367-residue chain is Protein pxr1 (367 aa).

Disordered stretches follow at residues 1–28 (MGLSAPKNKIKLSHDPNNTKWSGNTDSF) and 156–336 (KALK…PMGI). Over residues 15-27 (DPNNTKWSGNTDS) the composition is skewed to polar residues. The 55-residue stretch at 25–79 (TDSFGHRMMKSQGWTPGEYLGAKDAAHAEFHTAANASHIRVVIKDNNLGLGAKIG) folds into the G-patch domain. Over residues 167-182 (SSDDSDSSSDEEEEEK) the composition is skewed to acidic residues. Basic residues-rich tracts occupy residues 209–221 (SKKSKKDKKSKKR), 236–248 (KSKKSKKDRKSKS), and 265–277 (KARKKEKKEKKRR). Low complexity predominate over residues 282–296 (ATAGADTEETSSTSK). Positions 297–309 (SSKKNSKKDKHKS) are enriched in basic residues. The span at 310 to 328 (SSASESSTKESTPTVTESS) shows a compositional bias: low complexity.

The protein belongs to the PINX1 family.

It localises to the nucleus. The protein localises to the nucleolus. Functionally, involved in rRNA-processing at A0, A1 and A2 sites and negatively regulates telomerase. This Sclerotinia sclerotiorum (strain ATCC 18683 / 1980 / Ss-1) (White mold) protein is Protein pxr1 (pxr1).